A 396-amino-acid chain; its full sequence is Argininosuccinate synthase (396 aa).

9–17 (AYSGGLDTS) serves as a coordination point for ATP. Tyrosine 85 lines the L-citrulline pocket. Glycine 115 provides a ligand contact to ATP. Residues threonine 117, asparagine 121, and aspartate 122 each coordinate L-aspartate. Asparagine 121 provides a ligand contact to L-citrulline. Arginine 125, serine 173, glutamate 258, and tyrosine 270 together coordinate L-citrulline.

The protein belongs to the argininosuccinate synthase family. Type 1 subfamily. As to quaternary structure, homotetramer.

The protein resides in the cytoplasm. The catalysed reaction is L-citrulline + L-aspartate + ATP = 2-(N(omega)-L-arginino)succinate + AMP + diphosphate + H(+). It functions in the pathway amino-acid biosynthesis; L-arginine biosynthesis; L-arginine from L-ornithine and carbamoyl phosphate: step 2/3. The polypeptide is Argininosuccinate synthase (Streptococcus agalactiae serotype Ia (strain ATCC 27591 / A909 / CDC SS700)).